The chain runs to 303 residues: MEDYVKIEKIGEGTYGVVYKGRHKSTGQVVAMKKIRLESEEEGVPSTAVREVSLLQELKHPNVVRLLDVLMQESRLYLIFEFLSMDLKKYLDSIPSGQYMDPMLVKSYLYQILEGIYFCHRRRVLHRDLKPQNLLIDNKGVIKLADFGLSRAFGVPVRVYTHEVVTLWYRAPEVLLGSPRYSTPVDVWSTGTIFAELATKKPLFHGDSEIDQLFRIFRTLGTPNNDVWPDVESLPDYKSTFPKWKGGSLSSMVKNLDKNGLDLLAKMLIYNPPKRISAREAMTHPYFDDLDKSTLPAACINGV.

In terms of domain architecture, Protein kinase spans 4 to 287 (YVKIEKIGEG…AREAMTHPYF (284 aa)). ATP is bound by residues 10–18 (IGEGTYGVV) and Lys-33. The residue at position 14 (Thr-14) is a Phosphothreonine. Tyr-15 bears the Phosphotyrosine; by wee1 and wee2 mark. Catalysis depends on Asp-128, which acts as the Proton acceptor. Thr-161 carries the post-translational modification Phosphothreonine; by cak.

Belongs to the protein kinase superfamily. CMGC Ser/Thr protein kinase family. CDC2/CDKX subfamily. Forms a stable but non-covalent complex with cyclin B in mature oocytes. Phosphorylation at Tyr-15 by wee1 and wee2 inhibits the protein kinase activity and acts negative regulator of entry into mitosis (G2 to M transition).

It is found in the nucleus. Its subcellular location is the cytoplasm. The protein localises to the cytoskeleton. The protein resides in the microtubule organizing center. It localises to the centrosome. The enzyme catalyses L-seryl-[protein] + ATP = O-phospho-L-seryl-[protein] + ADP + H(+). It catalyses the reaction L-threonyl-[protein] + ATP = O-phospho-L-threonyl-[protein] + ADP + H(+). The catalysed reaction is [DNA-directed RNA polymerase] + ATP = phospho-[DNA-directed RNA polymerase] + ADP + H(+). Phosphorylation at Thr-14 or Tyr-15 inactivates the enzyme, while phosphorylation at Thr-161 activates it. Plays a key role in the control of the eukaryotic cell cycle by modulating the centrosome cycle as well as mitotic onset; promotes G2-M transition via association with multiple interphase cyclins. During G2 and early mitosis, CDC25A/B/C-mediated dephosphorylation activates CDK1/cyclin complexes which phosphorylate several substrates that trigger at least centrosome separation, Golgi dynamics, nuclear envelope breakdown and chromosome condensation. Once chromosomes are condensed and aligned at the metaphase plate, CDK1 activity is switched off by WEE1- and PKMYT1-mediated phosphorylation to allow sister chromatid separation, chromosome decondensation, reformation of the nuclear envelope and cytokinesis. Catalyzes lamin (LMNA, LMNB1 and LMNB2) phosphorylation at the onset of mitosis, promoting nuclear envelope breakdown. This Oryzias curvinotus (Hynann ricefish) protein is Cyclin-dependent kinase 1 (cdk1).